A 256-amino-acid chain; its full sequence is Imidazole glycerol phosphate synthase subunit HisF (256 aa).

Residues Asp12 and Asp131 contribute to the active site.

This sequence belongs to the HisA/HisF family. Heterodimer of HisH and HisF.

It localises to the cytoplasm. The enzyme catalyses 5-[(5-phospho-1-deoxy-D-ribulos-1-ylimino)methylamino]-1-(5-phospho-beta-D-ribosyl)imidazole-4-carboxamide + L-glutamine = D-erythro-1-(imidazol-4-yl)glycerol 3-phosphate + 5-amino-1-(5-phospho-beta-D-ribosyl)imidazole-4-carboxamide + L-glutamate + H(+). It participates in amino-acid biosynthesis; L-histidine biosynthesis; L-histidine from 5-phospho-alpha-D-ribose 1-diphosphate: step 5/9. In terms of biological role, IGPS catalyzes the conversion of PRFAR and glutamine to IGP, AICAR and glutamate. The HisF subunit catalyzes the cyclization activity that produces IGP and AICAR from PRFAR using the ammonia provided by the HisH subunit. The sequence is that of Imidazole glycerol phosphate synthase subunit HisF from Ectopseudomonas mendocina (strain ymp) (Pseudomonas mendocina).